The following is a 354-amino-acid chain: Inactive ADP-ribosyltransferase arh2 (354 aa).

The protein belongs to the ADP-ribosylglycohydrolase family. As to expression, expressed in heart (at protein level). A short form is detected in both heart and tadpole tail (at protein level).

The protein localises to the cytoplasm. It localises to the myofibril. It is found in the sarcomere. In terms of biological role, required for myofibril assembly and outgrowth of the cardiac chambers in the developing heart. Appears to be catalytically inactive, showing no activity against O-acetyl-ADP-ribose. In Xenopus laevis (African clawed frog), this protein is Inactive ADP-ribosyltransferase arh2 (adprhl1).